We begin with the raw amino-acid sequence, 446 residues long: Inward rectifier potassium channel 4 (446 aa).

At 1–55 (MHGHSRNGQAHVPRRKRRNRFVKKNGQCNVYFANLSNKSQRYMADIFTTCVDTRW) the chain is on the cytoplasmic side. A helical membrane pass occupies residues 56 to 80 (RYMLMIFSAAFLVSWLFFGLLFWCI). At 81–120 (AFFHGDLEPSPSGPTAGGPGGNGGGAAPTAAKPCIMHVNG) the chain is on the extracellular side. Residues 91–111 (PSGPTAGGPGGNGGGAAPTAA) form a val/Gly/Ala/Pro stretch region. The helical; Pore-forming intramembrane region spans 121–132 (FLGAFLFSVETQ). An intramembrane region (pore-forming) is located at residues 133–139 (TTIGYGF). A Selectivity filter motif is present at residues 134–139 (TIGYGF). Over 140-148 (RCVTEECPL) the chain is Extracellular. A helical membrane pass occupies residues 149 to 170 (AVIAVVVQSIVGCVIDSFMIGT). Residues 171 to 446 (IMAKMPRPKK…NISYRRESAI (276 aa)) are Cytoplasmic-facing. The PDZ-binding signature appears at 444-446 (SAI).

It belongs to the inward rectifier-type potassium channel (TC 1.A.2.1) family. KCNJ4 subfamily. Homomultimeric and heteromultimeric association with KCNJ2 and KCNJ12. Interacts with DLG2 and DLG4. Associates, via its PDZ-recognition domain, with a complex containing LIN7A, LIN7B, LIN7C, DLG1, CASK and APBA1. Interacts with TAX1BP3. TAX1BP3 competes with LIN7 family members for KCNJ4 binding. In terms of tissue distribution, detected in kidney distal convoluted tubules (at protein level). Widely expressed throughout the brain. Also found in some peripheral tissues.

It localises to the cell membrane. The protein localises to the cytoplasmic vesicle membrane. Its subcellular location is the postsynaptic cell membrane. It catalyses the reaction K(+)(in) = K(+)(out). Its function is as follows. Inward rectifier potassium channels are characterized by a greater tendency to allow potassium to flow into the cell rather than out of it. Their voltage dependence is regulated by the concentration of extracellular potassium; as external potassium is raised, the voltage range of the channel opening shifts to more positive voltages. The inward rectification is mainly due to the blockage of outward current by internal magnesium. Can be blocked by extracellular barium and cesium. The chain is Inward rectifier potassium channel 4 (Kcnj4) from Rattus norvegicus (Rat).